We begin with the raw amino-acid sequence, 696 residues long: MSTGSSPFVDHKSNNSTISINNNSSILNESSISKAYVSKLEFQLDTIKTENRILQQEKDQITSDYRKIIDEKNQELENLKLNFKYVYDEKNQLESKLTNQEQVSTNNINQLSDEIQTYKRENLKLTKDYNSLLDKFNKLNRKNQQIMHDLNKEIEVNDKLHQELKIKEKTNQELQKASDTAINELEQYSKILDKKNGSDNLLYKNLTTKSNNLQNINHQLQNKIDQLLQNKTSNELLKQQNQSLLHKLQNLENIESKYLQLEIEKLQLETKYNDLFKALDTAIASSNEYKDNENTDDTIHTSKVKSFIEYCNNLQAKNLTLQEKYDSKIIQVKELTKELEDHAREIETDFLPTITDLESKLKVYADQNTKLERTKSLREKEITFLRNSLKQMEQIHANQQHKQQEQEKEENTENKSISQYMTNLEKLVDEYKTKIDELEKKNLEYNKSSIITNEKTPSNKRQRLESNYTFKTQAIELEKENIEISSKLKQAESTIEQLKFKISELDKVETRKEQYRILQLKNNLISQDQFIKQTTLIALRKENEELINKYIKNLPIEEQIPKGVFQRQEDDKQRLQAQIDHLTKRSTRLREVFTKKSKDIITVIAKYFGFIIEFLPNPINPTDLFSRIKLRSRYIPSEEDCYLIIDVENRGLKAHGNFQFKQICEELAQYWVNENNQFPCLLSAVNLKLYEIYASK.

Disordered regions lie at residues 1 to 22 (MSTG…SINN) and 394 to 415 (QIHA…TENK). The segment covering 402-413 (KQQEQEKEENTE) has biased composition (basic and acidic residues).

It belongs to the MAD1 family. In terms of assembly, component of the mitotic checkpoint complex (MCC).

The protein resides in the nucleus. Central component of the spindle assembly checkpoint which is a feedback control that prevents cells with incompletely assembled spindles from leaving mitosis. The sequence is that of Spindle assembly checkpoint component MAD1 from Candida albicans (strain SC5314 / ATCC MYA-2876) (Yeast).